The chain runs to 254 residues: Glycerol operon regulatory protein (254 aa).

Positions 5–67 (IQSLERAAAM…DASGRYQLGA (63 aa)) constitute an HTH iclR-type domain. Positions 27–46 (LSDIASSLGLAKGTAHGILR) form a DNA-binding region, H-T-H motif. In terms of domain architecture, IclR-ED spans 82–251 (LRARALVWTD…ARAVSRDLGA (170 aa)).

In terms of biological role, may be an activator protein for the gylABX operon. This is Glycerol operon regulatory protein (gylR) from Streptomyces coelicolor (strain ATCC BAA-471 / A3(2) / M145).